A 464-amino-acid chain; its full sequence is DNA primase DnaG (464 aa).

Residues 200 to 274 (DSIIVVEGRA…DVDYVARAPE (75 aa)) form the Toprim domain. Glu-206, Asp-248, and Asp-250 together coordinate Mg(2+). A compositionally biased stretch (basic and acidic residues) spans 322–332 (NGREEKVREVK). The tract at residues 322–359 (NGREEKVREVKPPAPAPAPAPAPKPIEKPEPKEREEKI) is disordered. Pro residues predominate over residues 333–345 (PPAPAPAPAPAPK). Positions 346–359 (PIEKPEPKEREEKI) are enriched in basic and acidic residues.

It belongs to the archaeal DnaG primase family. In terms of assembly, forms a ternary complex with MCM helicase and DNA. Component of the archaeal exosome complex. Mg(2+) serves as cofactor.

The catalysed reaction is ssDNA + n NTP = ssDNA/pppN(pN)n-1 hybrid + (n-1) diphosphate.. In terms of biological role, RNA polymerase that catalyzes the synthesis of short RNA molecules used as primers for DNA polymerase during DNA replication. Also part of the exosome, which is a complex involved in RNA degradation. Acts as a poly(A)-binding protein that enhances the interaction between heteromeric, adenine-rich transcripts and the exosome. This Thermococcus onnurineus (strain NA1) protein is DNA primase DnaG.